Reading from the N-terminus, the 336-residue chain is C2H2 finger domain transcription factor mtfA (336 aa).

The tract at residues 1 to 245 (MDVASLISPS…PSPGHQQMIS (245 aa)) is disordered. Polar residues-rich tracts occupy residues 7–29 (ISPSESDTVPTFRSRSIQNSSAS) and 36–56 (EQSTGSYFSAVPTHTTSYSRT). Over residues 136 to 149 (SPSTSSVSAASSSA) the composition is skewed to low complexity. The segment covering 168–181 (TDRSSISSQGSVQH) has biased composition (polar residues). Positions 182-210 (AASAPYASPAPSVSSFSSPIEPSTPSTAA) are enriched in low complexity. Polar residues predominate over residues 216–245 (PAPNTFQNPSPFPQTSTASLPSPGHQQMIS). C2H2-type zinc fingers lie at residues 272 to 294 (YICRTCHKAFSRPSSLRIHSHSH) and 300 to 325 (FRCTHAGCGKAFSVRSNMKRHERGCH).

It localises to the nucleus. Transcription factor that controls morphogenesis and virulence. Acts as a positive regulator of gliotixin and protease production. The chain is C2H2 finger domain transcription factor mtfA from Aspergillus fumigatus (strain CBS 144.89 / FGSC A1163 / CEA10) (Neosartorya fumigata).